A 477-amino-acid polypeptide reads, in one-letter code: MAASSLWGPAVAGGGESSESEDDGWEIGYLDRAPQKFTAPLPAEEKNEMFKKALTTGDTSLVEELLNAGISVDSSFRYGWTPLMFAASIANVNLVRVLLNRGANASFEKDKQTVLMTACSARGSQEQIIKCVELLLSRNADPNVACRRQMTPIMYAARGGHPQVVALLVAHGAEVNAQDENGYTALTWAAYQGHKNVILKLLELGANKMLQTKDGKTPSEIANRNKHPEIFSLLSLTLNPLEGKIQQLTKEETICKMLATDCDKEKDNLFSSYTAFGELDLFLHGLGLEHMTDLLKERDISLRHLMTMKKDEFLKNGITNKDQQKILSALKELMVEEIKFGELPEVAKLEISGDEFLNFLLKLNKQCGHLITAVQNIITELPVNSHKIVLEWASPRNFTSVCEELVTNVEGLSEEVCRLKDLIQKLQNERESDPTHIPLVEEVSPWKSRLLKRTAVTVCGFGILLGICKLMFQRKLL.

The tract at residues 1–24 (MAASSLWGPAVAGGGESSESEDDG) is disordered. Phosphoserine is present on residues serine 17, serine 18, and serine 20. 6 ANK repeats span residues 45–74 (EKNE…SVDS), 78–107 (YGWT…NASF), 110–144 (DKQT…DPNV), 148–177 (RQMT…EVNA), 181–210 (NGYT…NKML), and 214–243 (DGKT…PLEG). The region spanning 272–334 (SYTAFGELDL…KILSALKELM (63 aa)) is the SAM domain.

In terms of assembly, interacts with DDX4, PIWIL1, RANBP9 and TDRD1.

The protein resides in the cytoplasm. Plays a central role during spermatogenesis by repressing transposable elements and preventing their mobilization, which is essential for the germline integrity. Acts via the piRNA metabolic process, which mediates the repression of transposable elements during meiosis by forming complexes composed of piRNAs and Piwi proteins and governs the methylation and subsequent repression of transposons. Its association with pi-bodies suggests a participation in the primary piRNAs metabolic process. Required prior to the pachytene stage to facilitate the production of multiple types of piRNAs, including those associated with repeats involved in the regulation of retrotransposons. May act by mediating protein-protein interactions during germ cell maturation. The protein is Ankyrin repeat, SAM and basic leucine zipper domain-containing protein 1 (ASZ1) of Echinops telfairi (Lesser hedgehog tenrec).